A 360-amino-acid chain; its full sequence is Peptide chain release factor 1 (360 aa).

The residue at position 237 (glutamine 237) is an N5-methylglutamine.

It belongs to the prokaryotic/mitochondrial release factor family. Post-translationally, methylated by PrmC. Methylation increases the termination efficiency of RF1.

Its subcellular location is the cytoplasm. Peptide chain release factor 1 directs the termination of translation in response to the peptide chain termination codons UAG and UAA. The polypeptide is Peptide chain release factor 1 (Nitrosococcus oceani (strain ATCC 19707 / BCRC 17464 / JCM 30415 / NCIMB 11848 / C-107)).